Reading from the N-terminus, the 943-residue chain is Isoleucine--tRNA ligase (943 aa).

The 'HIGH' region motif lies at 58-68 (PYANGSIHIGH). Position 567 (Glu567) interacts with L-isoleucyl-5'-AMP. Residues 608 to 612 (KMSKS) carry the 'KMSKS' region motif. Lys611 contributes to the ATP binding site. Residues Cys906, Cys909, Cys926, and Cys929 each coordinate Zn(2+).

It belongs to the class-I aminoacyl-tRNA synthetase family. IleS type 1 subfamily. Monomer. It depends on Zn(2+) as a cofactor.

It localises to the cytoplasm. It catalyses the reaction tRNA(Ile) + L-isoleucine + ATP = L-isoleucyl-tRNA(Ile) + AMP + diphosphate. Catalyzes the attachment of isoleucine to tRNA(Ile). As IleRS can inadvertently accommodate and process structurally similar amino acids such as valine, to avoid such errors it has two additional distinct tRNA(Ile)-dependent editing activities. One activity is designated as 'pretransfer' editing and involves the hydrolysis of activated Val-AMP. The other activity is designated 'posttransfer' editing and involves deacylation of mischarged Val-tRNA(Ile). This chain is Isoleucine--tRNA ligase, found in Ectopseudomonas mendocina (strain ymp) (Pseudomonas mendocina).